A 617-amino-acid polypeptide reads, in one-letter code: Acetolactate synthase large subunit (617 aa).

Thiamine diphosphate is bound at residue E71. FAD contacts are provided by residues R173, 281–302 (HGTA…VGAR), and 324–343 (EIDP…VLGD). The interval 413 to 492 (QHQMWAAQHL…VKVVIVNNHW (80 aa)) is thiamine pyrophosphate binding. 2 residues coordinate Mg(2+): D463 and N490.

It belongs to the TPP enzyme family. As to quaternary structure, dimer of large and small chains. Mg(2+) serves as cofactor. Requires thiamine diphosphate as cofactor.

The catalysed reaction is 2 pyruvate + H(+) = (2S)-2-acetolactate + CO2. It functions in the pathway amino-acid biosynthesis; L-isoleucine biosynthesis; L-isoleucine from 2-oxobutanoate: step 1/4. It participates in amino-acid biosynthesis; L-valine biosynthesis; L-valine from pyruvate: step 1/4. This chain is Acetolactate synthase large subunit (ilvB), found in Parasynechococcus marenigrum (strain WH8102).